The sequence spans 89 residues: Small ribosomal subunit protein uS15 (89 aa).

Belongs to the universal ribosomal protein uS15 family. As to quaternary structure, part of the 30S ribosomal subunit. Forms a bridge to the 50S subunit in the 70S ribosome, contacting the 23S rRNA.

One of the primary rRNA binding proteins, it binds directly to 16S rRNA where it helps nucleate assembly of the platform of the 30S subunit by binding and bridging several RNA helices of the 16S rRNA. In terms of biological role, forms an intersubunit bridge (bridge B4) with the 23S rRNA of the 50S subunit in the ribosome. The polypeptide is Small ribosomal subunit protein uS15 (Chlamydia felis (strain Fe/C-56) (Chlamydophila felis)).